The following is a 453-amino-acid chain: RuvB-like helicase 1 (453 aa).

71-78 (GGPGTGKT) lines the ATP pocket.

It belongs to the RuvB family. In terms of assembly, may form heterododecamers with RVB2. Component of the SWR1 chromatin remodeling complex, the INO80 chromatin remodeling complex, and of the R2TP complex.

Its subcellular location is the nucleus. The enzyme catalyses ATP + H2O = ADP + phosphate + H(+). In terms of biological role, DNA helicase which participates in several chromatin remodeling complexes, including the SWR1 and the INO80 complexes. The SWR1 complex mediates the ATP-dependent exchange of histone H2A for the H2A variant HZT1 leading to transcriptional regulation of selected genes by chromatin remodeling. The INO80 complex remodels chromatin by shifting nucleosomes and is involved in DNA repair. Also involved in pre-rRNA processing. The chain is RuvB-like helicase 1 (RVB1) from Yarrowia lipolytica (strain CLIB 122 / E 150) (Yeast).